A 479-amino-acid polypeptide reads, in one-letter code: Ribosomal RNA small subunit methyltransferase F (479 aa).

S-adenosyl-L-methionine-binding positions include A125–K131, E149, D176, and D194. The Nucleophile role is filled by C247.

This sequence belongs to the class I-like SAM-binding methyltransferase superfamily. RsmB/NOP family.

The protein resides in the cytoplasm. It carries out the reaction cytidine(1407) in 16S rRNA + S-adenosyl-L-methionine = 5-methylcytidine(1407) in 16S rRNA + S-adenosyl-L-homocysteine + H(+). Its function is as follows. Specifically methylates the cytosine at position 1407 (m5C1407) of 16S rRNA. The chain is Ribosomal RNA small subunit methyltransferase F from Escherichia fergusonii (strain ATCC 35469 / DSM 13698 / CCUG 18766 / IAM 14443 / JCM 21226 / LMG 7866 / NBRC 102419 / NCTC 12128 / CDC 0568-73).